Reading from the N-terminus, the 91-residue chain is Probable Fe(2+)-trafficking protein (91 aa).

This sequence belongs to the Fe(2+)-trafficking protein family.

Could be a mediator in iron transactions between iron acquisition and iron-requiring processes, such as synthesis and/or repair of Fe-S clusters in biosynthetic enzymes. The polypeptide is Probable Fe(2+)-trafficking protein (Histophilus somni (strain 129Pt) (Haemophilus somnus)).